A 232-amino-acid polypeptide reads, in one-letter code: Ubiquinone biosynthesis O-methyltransferase (232 aa).

R36, G55, D76, and L120 together coordinate S-adenosyl-L-methionine.

This sequence belongs to the methyltransferase superfamily. UbiG/COQ3 family.

It catalyses the reaction a 3-demethylubiquinol + S-adenosyl-L-methionine = a ubiquinol + S-adenosyl-L-homocysteine + H(+). The catalysed reaction is a 3-(all-trans-polyprenyl)benzene-1,2-diol + S-adenosyl-L-methionine = a 2-methoxy-6-(all-trans-polyprenyl)phenol + S-adenosyl-L-homocysteine + H(+). It functions in the pathway cofactor biosynthesis; ubiquinone biosynthesis. O-methyltransferase that catalyzes the 2 O-methylation steps in the ubiquinone biosynthetic pathway. The protein is Ubiquinone biosynthesis O-methyltransferase of Pseudomonas syringae pv. tomato (strain ATCC BAA-871 / DC3000).